The chain runs to 263 residues: Indolethylamine N-methyltransferase (263 aa).

Lys13 carries the N6-succinyllysine modification. S-adenosyl-L-methionine contacts are provided by residues Tyr20, Tyr25, 63–64 (GS), Tyr69, Asp85, and Asn90. Lys96 is modified (N6-succinyllysine). S-adenosyl-L-methionine contacts are provided by residues 142–143 (DV) and Leu163.

It belongs to the class I-like SAM-binding methyltransferase superfamily. NNMT/PNMT/TEMT family. Monomer.

The protein resides in the cytoplasm. The catalysed reaction is a tertiary amine + S-adenosyl-L-methionine = a methylated tertiary amine + S-adenosyl-L-homocysteine + H(+). The enzyme catalyses a secondary amine + S-adenosyl-L-methionine = a methylated secondary amine + S-adenosyl-L-homocysteine + H(+). It catalyses the reaction a primary amine + S-adenosyl-L-methionine = a methylated primary amine + S-adenosyl-L-homocysteine + H(+). It carries out the reaction dimethyl sulfide + S-adenosyl-L-methionine = trimethylsulfonium + S-adenosyl-L-homocysteine. Catalyzes the N-methylation of tryptamine and structurally related compounds. Functions as a thioether S-methyltransferase and is active with a variety of thioethers and the corresponding selenium and tellurium compounds, including 3-methylthiopropionaldehyde, dimethyl selenide, dimethyl telluride, 2-methylthioethylamine, 2-methylthioethanol, methyl-n-propyl sulfide and diethyl sulfide. Plays an important role in the detoxification of selenium compounds. The protein is Indolethylamine N-methyltransferase (INMT) of Pongo abelii (Sumatran orangutan).